The chain runs to 83 residues: Small ribosomal subunit protein eS21 (83 aa).

It belongs to the eukaryotic ribosomal protein eS21 family. Component of the 40S small ribosomal subunit.

It is found in the cytoplasm. The protein resides in the cytosol. It localises to the rough endoplasmic reticulum. The sequence is that of Small ribosomal subunit protein eS21 (RpS21) from Ixodes scapularis (Black-legged tick).